Consider the following 143-residue polypeptide: MAVYLLAVAILFCIQGWPSGTVQGEVMPFMEVYDRSACQTREMLVPILKEYPNEVSHLFKPSCVPVLRCGGCCSDESLTCTATGKRSVGREVMRVDPHKGTSKIEVMQFKEHTACECRPRSPGDVNDGRNPKEGEPRARFPFV.

The signal sequence occupies residues 1–24 (MAVYLLAVAILFCIQGWPSGTVQG). Glu-25 bears the Pyrrolidone carboxylic acid (Glu) mark. 3 disulfide bridges follow: Cys-38/Cys-80, Cys-69/Cys-115, and Cys-73/Cys-117. The disordered stretch occupies residues 117-143 (CRPRSPGDVNDGRNPKEGEPRARFPFV).

The protein belongs to the PDGF/VEGF growth factor family. Snake venom VEGF subfamily. As to quaternary structure, homodimer; disulfide-linked. Interacts with VEGF receptor-1 (FLT1) with a high affinity, whereas it binds to VEGF receptor-2 (KDR) with a low affinity. Does not bind to VEGFR-3/FLT4 and neuropilin-1 (NRP1). Expressed by the venom gland.

It localises to the secreted. In terms of biological role, snake venom VEGFs may contribute to venom dispersion and prey subjugation by inducing vascular permeability and hypotension. This protein activates the vascular endothelial growth factor receptor-1 (VEGFR-1/FLT1), and consequently promotes the proliferation and tissue factor production of endothelial cells, the neovascularization in the chicken chorioallantoic membrane, and increases vascular permeability. Also stimulates tissue-factor production and human monocyte chemotaxis. In Protobothrops mucrosquamatus (Taiwan habu), this protein is Snake venom vascular endothelial growth factor toxin.